The chain runs to 604 residues: Asparagine synthetase [glutamine-hydrolyzing] 1 (604 aa).

The active-site Nucleophile is the Cys2. One can recognise a Glutamine amidotransferase type-2 domain in the interval 2-186 (CGILAVLGAA…PGHLYSSAAG (185 aa)). L-glutamine contacts are provided by residues 50-54 (RLAIV), 75-77 (NGE), and Asp99. The Asparagine synthetase domain maps to 211–451 (LREAFEKAVI…LPKHILYRQK (241 aa)). Residues Leu232, Val268, and 342–343 (SG) contribute to the ATP site.

The enzyme catalyses L-aspartate + L-glutamine + ATP + H2O = L-asparagine + L-glutamate + AMP + diphosphate + H(+). It functions in the pathway amino-acid biosynthesis; L-asparagine biosynthesis. Functionally, essential for nitrogen assimilation, distribution and remobilization within the plant via the phloem. The chain is Asparagine synthetase [glutamine-hydrolyzing] 1 from Oryza sativa subsp. japonica (Rice).